Consider the following 494-residue polypeptide: Pre-hexon-linking protein IIIa (494 aa).

Residues 1–101 (MAALSPTVRA…ALLQRVGRYN (101 aa)) form a peripentonal hexon-tethering domain region. The segment at 132-245 (GSLVALNGFL…FTDSRTVNGD (114 aa)) is binding to hexon-linking protein. Thr268 is subject to Phosphothreonine; by host. 2 positions are modified to phosphoserine; by host: Ser439 and Ser456. Residues 484 to 494 (TNPFKHLQPQF) constitute a propeptide that is removed on maturation.

Belongs to the adenoviridae hexon-linking protein IIIa family. In terms of assembly, interacts with hexon proteins; this interaction tethers the peripentonal hexons to hexons situated in the facet. Interacts with the penton protein (via N-terminus). Interacts with packaging protein 3; this interaction is required to promote correct genome packaging. Post-translationally, cleaved near the C-terminus by the viral protease during virion maturation to form the mature protein.

It is found in the virion. The protein localises to the host nucleus. Structural component of the virion that acts as a cement protein on the capsid exterior which mediates the interactions between the hexons, including the peripentonal hexons, and reaches all the way to the penton vertices. Two hexon linking proteins IIIa, one from each facet, stabilize the unique edge interface between a pair of facets. As the virus enters the host cell, hexon linking proteins IIIa are shed concomitant with virion acidification in the endosome. During virus assembly, seems to play a role in the serotype specificity of the packaging of viral DNA via its interaction with packaging protein 3. This chain is Pre-hexon-linking protein IIIa, found in Murine adenovirus A serotype 1 (MAdV-1).